Reading from the N-terminus, the 65-residue chain is Large ribosomal subunit protein bL35 (65 aa).

Belongs to the bacterial ribosomal protein bL35 family.

The sequence is that of Large ribosomal subunit protein bL35 from Karelsulcia muelleri (strain GWSS) (Sulcia muelleri).